We begin with the raw amino-acid sequence, 294 residues long: Eukaryotic translation initiation factor 3 subunit F (294 aa).

The 149-residue stretch at 7–155 folds into the MPN domain; sequence VNVHPGVYMN…VRAYLRSKAG (149 aa).

It belongs to the eIF-3 subunit F family. In terms of assembly, component of the eukaryotic translation initiation factor 3 (eIF-3) complex.

It localises to the cytoplasm. Its function is as follows. Component of the eukaryotic translation initiation factor 3 (eIF-3) complex, which is involved in protein synthesis of a specialized repertoire of mRNAs and, together with other initiation factors, stimulates binding of mRNA and methionyl-tRNAi to the 40S ribosome. The eIF-3 complex specifically targets and initiates translation of a subset of mRNAs involved in cell proliferation. The protein is Eukaryotic translation initiation factor 3 subunit F of Caenorhabditis elegans.